Consider the following 260-residue polypeptide: MKTNGHFKDFAWKKCLLGASVGALLVGCSPHIIETNEVALKLNYHPASEKVQALDEKILLLRPAFQYSDNIAKEYENKFKNQTVLKVEQILQNQGYKVINVDSSDKDDFSFAQKKEGYLAVAMNGEIVLRPDPKRTIQKKSEPGLLFSTGLDKMEGVLIPAGFVKVTILEPMSGESLDSFTMDLSELDIQEKFLKTTHSSHSGGLVSTMVKGTDNSNDAIKSALNKIFGSIMQEIDKKLTQKNLESYQKDAKELKGKRNR.

Positions 1–27 (MKTNGHFKDFAWKKCLLGASVGALLVG) are cleaved as a signal peptide. Cys28 carries the N-palmitoyl cysteine lipid modification. Cys28 is lipidated: S-diacylglycerol cysteine. The segment at 134–139 (KRTIQK) is N-acetyl-neuraminyl-alpha(2,3)-lactose binding motif.

It is found in the cell outer membrane. In Helicobacter pylori (Campylobacter pylori), this protein is Neuraminyllactose-binding hemagglutinin (hpaA).